The following is a 210-amino-acid chain: Large ribosomal subunit protein uL3 (210 aa).

Residues 133 to 156 (ASHGNSLSHRVPGSIGQNQTPGKV) are disordered. Residue Q151 is modified to N5-methylglutamine.

This sequence belongs to the universal ribosomal protein uL3 family. As to quaternary structure, part of the 50S ribosomal subunit. Forms a cluster with proteins L14 and L19. Methylated by PrmB.

Its function is as follows. One of the primary rRNA binding proteins, it binds directly near the 3'-end of the 23S rRNA, where it nucleates assembly of the 50S subunit. In Hamiltonella defensa subsp. Acyrthosiphon pisum (strain 5AT), this protein is Large ribosomal subunit protein uL3.